Reading from the N-terminus, the 285-residue chain is UPF0354 protein MW1686 (285 aa).

Belongs to the UPF0354 family.

In Staphylococcus aureus (strain MW2), this protein is UPF0354 protein MW1686.